A 306-amino-acid chain; its full sequence is MPQSHIPVMLNEMLANLAPKDGEFYLDCTFGAGGYSKAILESCDCYITALDRDPNVIKKAEEIKQNYGERFDFIETNFADSFAKLKEKKFDGVVLDLGVSSMQLDIADRGFSFLHDGPLDMRMSGQGLSAEEFVNIAEEKELADVIYKYGDESFSRRIAKRIVEYRKTTRIDSTGKLAQIVRSSIGFRKGKIDPATKTFQAIRIYINNELGELERFLANVKNILKKDGRLVVVSFHSLEDRIVKNFFKENSEKPVARSKYAKDDIAIDPDKWLKIITNKALATSDKEVGLNIRARSAKLRAAKKIL.

Residues 33–35, D51, F78, D96, and Q103 contribute to the S-adenosyl-L-methionine site; that span reads GGY.

This sequence belongs to the methyltransferase superfamily. RsmH family.

It localises to the cytoplasm. It carries out the reaction cytidine(1402) in 16S rRNA + S-adenosyl-L-methionine = N(4)-methylcytidine(1402) in 16S rRNA + S-adenosyl-L-homocysteine + H(+). Specifically methylates the N4 position of cytidine in position 1402 (C1402) of 16S rRNA. The protein is Ribosomal RNA small subunit methyltransferase H of Rickettsia felis (strain ATCC VR-1525 / URRWXCal2) (Rickettsia azadi).